The primary structure comprises 418 residues: Tyrosine--tRNA ligase (418 aa).

Tyr-34 is an L-tyrosine binding site. Positions 39–48 match the 'HIGH' region motif; sequence PTADSLHLGH. 2 residues coordinate L-tyrosine: Tyr-169 and Gln-173. Positions 229–233 match the 'KMSKS' region motif; it reads KFGKS. Position 232 (Lys-232) interacts with ATP. The region spanning 352-418 is the S4 RNA-binding domain; sequence NNIVELLVSS…GKKKYFVLTY (67 aa).

It belongs to the class-I aminoacyl-tRNA synthetase family. TyrS type 1 subfamily. Homodimer.

It is found in the cytoplasm. The enzyme catalyses tRNA(Tyr) + L-tyrosine + ATP = L-tyrosyl-tRNA(Tyr) + AMP + diphosphate + H(+). Catalyzes the attachment of tyrosine to tRNA(Tyr) in a two-step reaction: tyrosine is first activated by ATP to form Tyr-AMP and then transferred to the acceptor end of tRNA(Tyr). The chain is Tyrosine--tRNA ligase from Streptococcus pneumoniae serotype 19F (strain G54).